The chain runs to 112 residues: Large ribosomal subunit protein uL24 (112 aa).

Positions 92-112 (ERDGKQKTVRVRVSKSTGKDL) are disordered.

This sequence belongs to the universal ribosomal protein uL24 family. Part of the 50S ribosomal subunit.

Functionally, one of two assembly initiator proteins, it binds directly to the 5'-end of the 23S rRNA, where it nucleates assembly of the 50S subunit. One of the proteins that surrounds the polypeptide exit tunnel on the outside of the subunit. The chain is Large ribosomal subunit protein uL24 from Kocuria rhizophila (strain ATCC 9341 / DSM 348 / NBRC 103217 / DC2201).